Consider the following 170-residue polypeptide: CDP-archaeol synthase (170 aa).

5 helical membrane passes run 6–26, 53–73, 83–103, 114–134, and 140–160; these read LLWA…PVLV, GLIG…FITP, LLLA…GSFF, PAIG…AYPV, and GQII…NYFA.

The protein belongs to the CDP-archaeol synthase family. The cofactor is Mg(2+).

It localises to the cell membrane. The enzyme catalyses 2,3-bis-O-(geranylgeranyl)-sn-glycerol 1-phosphate + CTP + H(+) = CDP-2,3-bis-O-(geranylgeranyl)-sn-glycerol + diphosphate. Its pathway is membrane lipid metabolism; glycerophospholipid metabolism. Catalyzes the formation of CDP-2,3-bis-(O-geranylgeranyl)-sn-glycerol (CDP-archaeol) from 2,3-bis-(O-geranylgeranyl)-sn-glycerol 1-phosphate (DGGGP) and CTP. This reaction is the third ether-bond-formation step in the biosynthesis of archaeal membrane lipids. This Thermococcus onnurineus (strain NA1) protein is CDP-archaeol synthase.